Consider the following 218-residue polypeptide: Probable transaldolase (218 aa).

Lys83 (schiff-base intermediate with substrate) is an active-site residue.

Belongs to the transaldolase family. Type 3B subfamily.

The protein localises to the cytoplasm. It carries out the reaction D-sedoheptulose 7-phosphate + D-glyceraldehyde 3-phosphate = D-erythrose 4-phosphate + beta-D-fructose 6-phosphate. Its pathway is carbohydrate degradation; pentose phosphate pathway; D-glyceraldehyde 3-phosphate and beta-D-fructose 6-phosphate from D-ribose 5-phosphate and D-xylulose 5-phosphate (non-oxidative stage): step 2/3. Functionally, transaldolase is important for the balance of metabolites in the pentose-phosphate pathway. This is Probable transaldolase from Kosmotoga olearia (strain ATCC BAA-1733 / DSM 21960 / TBF 19.5.1).